Here is a 313-residue protein sequence, read N- to C-terminus: Olfactory receptor 1J4 (313 aa).

Over 1–25 the chain is Extracellular; the sequence is MKRENQSSVSEFLLLDLPIWPEQQA. N-linked (GlcNAc...) asparagine glycosylation occurs at Asn-5. The chain crosses the membrane as a helical span at residues 26 to 49; that stretch reads VFFTLFLGMYLITVLGNLLIILLI. The Cytoplasmic segment spans residues 50 to 57; sequence RLDSHLHT. The helical transmembrane segment at 58–79 threads the bilayer; the sequence is PMFFFLSHLALTDISLSSVTVP. Over 80 to 100 the chain is Extracellular; the sequence is KMLLSMQTQDQSILYAGCVTQ. Cys-97 and Cys-189 are disulfide-bonded. A helical transmembrane segment spans residues 101–120; the sequence is MYFFIFFTDLDNFLLTSMAY. Topologically, residues 121–139 are cytoplasmic; that stretch reads DRYVAICHPLRYTTIMKEG. A helical membrane pass occupies residues 140 to 158; the sequence is LCNLLVTVSWILSCTNALS. At 159–195 the chain is on the extracellular side; that stretch reads HTLLLAQLSFCADNTIPHFFCDLVALLKLSCSDISLN. A helical membrane pass occupies residues 196–219; sequence ELVIFTVGQAVITLPLICILISYG. Residues 220 to 236 are Cytoplasmic-facing; that stretch reads HIGVTILKAPSTKGIFK. A helical membrane pass occupies residues 237-259; that stretch reads ALSTCGSHLSVVSLYYGTIIGLY. Residues 260–272 lie on the Extracellular side of the membrane; it reads FLPSSSASSDKDV. A helical membrane pass occupies residues 273-292; the sequence is IASVMYTVITPLLNPFIYSL. The Cytoplasmic segment spans residues 293–313; sequence RNRDIKGALERLFNRATVLSQ.

The protein belongs to the G-protein coupled receptor 1 family.

It is found in the cell membrane. Functionally, odorant receptor. This chain is Olfactory receptor 1J4 (OR1J4), found in Homo sapiens (Human).